The following is a 423-amino-acid chain: Kynureninase (423 aa).

Residues L105, S106, 133-136, D218, H221, and Y243 each bind pyridoxal 5'-phosphate; that span reads FPSD. At K244 the chain carries N6-(pyridoxal phosphate)lysine. Residues W273 and N301 each coordinate pyridoxal 5'-phosphate.

This sequence belongs to the kynureninase family. In terms of assembly, homodimer. Pyridoxal 5'-phosphate serves as cofactor.

It carries out the reaction L-kynurenine + H2O = anthranilate + L-alanine + H(+). The catalysed reaction is 3-hydroxy-L-kynurenine + H2O = 3-hydroxyanthranilate + L-alanine + H(+). It functions in the pathway amino-acid degradation; L-kynurenine degradation; L-alanine and anthranilate from L-kynurenine: step 1/1. The protein operates within cofactor biosynthesis; NAD(+) biosynthesis; quinolinate from L-kynurenine: step 2/3. Functionally, catalyzes the cleavage of L-kynurenine (L-Kyn) and L-3-hydroxykynurenine (L-3OHKyn) into anthranilic acid (AA) and 3-hydroxyanthranilic acid (3-OHAA), respectively. The sequence is that of Kynureninase from Xanthomonas oryzae pv. oryzae (strain KACC10331 / KXO85).